Here is a 96-residue protein sequence, read N- to C-terminus: Aspartyl/glutamyl-tRNA(Asn/Gln) amidotransferase subunit C (96 aa).

The protein belongs to the GatC family. In terms of assembly, heterotrimer of A, B and C subunits.

The catalysed reaction is L-glutamyl-tRNA(Gln) + L-glutamine + ATP + H2O = L-glutaminyl-tRNA(Gln) + L-glutamate + ADP + phosphate + H(+). It carries out the reaction L-aspartyl-tRNA(Asn) + L-glutamine + ATP + H2O = L-asparaginyl-tRNA(Asn) + L-glutamate + ADP + phosphate + 2 H(+). Functionally, allows the formation of correctly charged Asn-tRNA(Asn) or Gln-tRNA(Gln) through the transamidation of misacylated Asp-tRNA(Asn) or Glu-tRNA(Gln) in organisms which lack either or both of asparaginyl-tRNA or glutaminyl-tRNA synthetases. The reaction takes place in the presence of glutamine and ATP through an activated phospho-Asp-tRNA(Asn) or phospho-Glu-tRNA(Gln). The chain is Aspartyl/glutamyl-tRNA(Asn/Gln) amidotransferase subunit C from Herpetosiphon aurantiacus (strain ATCC 23779 / DSM 785 / 114-95).